Reading from the N-terminus, the 130-residue chain is Iron-sulfur cluster insertion protein ErpA (130 aa).

Iron-sulfur cluster is bound by residues Cys46, Cys116, and Cys118.

This sequence belongs to the HesB/IscA family. In terms of assembly, homodimer. Iron-sulfur cluster serves as cofactor.

In terms of biological role, required for insertion of 4Fe-4S clusters for at least IspG. This is Iron-sulfur cluster insertion protein ErpA from Legionella pneumophila (strain Paris).